Consider the following 335-residue polypeptide: MIEADRIISGQAKVDEDVIDRAIRPKLLADYVGQPQVREQMDIFIKAAKLRQDALDHLLIFGPPGLGKTTLANIVANEMGVNIRTTSGPVLEKAGDLAAMLTNLEPHDVLFIDEIHRLSPAIEEVLYPAMEDYQLDIMIGEGPAARSIKLDLPPFTLVGATTRAGSLTSPLRDRFGIVQRLEFYSVEDLTSIVARSADCLNLELEQQAAFEVARRSRGTPRIANRLLRRVRDYADVRNGGIISINVAKQALSMLDVDDAGFDYLDRKLLSAVIERFDGGPVGLDNLAAAIGEERDTIEDVLEPYLIQQGFLQRTPRGRIATSQTYRHFGLQKLSD.

The large ATPase domain (RuvB-L) stretch occupies residues 4 to 184 (ADRIISGQAK…FGIVQRLEFY (181 aa)). ATP is bound by residues Ile-23, Arg-24, Gly-65, Lys-68, Thr-69, Thr-70, 131-133 (EDY), Arg-174, Tyr-184, and Arg-221. Thr-69 contacts Mg(2+). The tract at residues 185 to 255 (SVEDLTSIVA…VAKQALSMLD (71 aa)) is small ATPAse domain (RuvB-S). Positions 258 to 335 (DAGFDYLDRK…RHFGLQKLSD (78 aa)) are head domain (RuvB-H). Arg-294, Arg-313, and Arg-318 together coordinate DNA.

Belongs to the RuvB family. In terms of assembly, homohexamer. Forms an RuvA(8)-RuvB(12)-Holliday junction (HJ) complex. HJ DNA is sandwiched between 2 RuvA tetramers; dsDNA enters through RuvA and exits via RuvB. An RuvB hexamer assembles on each DNA strand where it exits the tetramer. Each RuvB hexamer is contacted by two RuvA subunits (via domain III) on 2 adjacent RuvB subunits; this complex drives branch migration. In the full resolvosome a probable DNA-RuvA(4)-RuvB(12)-RuvC(2) complex forms which resolves the HJ.

It localises to the cytoplasm. The catalysed reaction is ATP + H2O = ADP + phosphate + H(+). In terms of biological role, the RuvA-RuvB-RuvC complex processes Holliday junction (HJ) DNA during genetic recombination and DNA repair, while the RuvA-RuvB complex plays an important role in the rescue of blocked DNA replication forks via replication fork reversal (RFR). RuvA specifically binds to HJ cruciform DNA, conferring on it an open structure. The RuvB hexamer acts as an ATP-dependent pump, pulling dsDNA into and through the RuvAB complex. RuvB forms 2 homohexamers on either side of HJ DNA bound by 1 or 2 RuvA tetramers; 4 subunits per hexamer contact DNA at a time. Coordinated motions by a converter formed by DNA-disengaged RuvB subunits stimulates ATP hydrolysis and nucleotide exchange. Immobilization of the converter enables RuvB to convert the ATP-contained energy into a lever motion, pulling 2 nucleotides of DNA out of the RuvA tetramer per ATP hydrolyzed, thus driving DNA branch migration. The RuvB motors rotate together with the DNA substrate, which together with the progressing nucleotide cycle form the mechanistic basis for DNA recombination by continuous HJ branch migration. Branch migration allows RuvC to scan DNA until it finds its consensus sequence, where it cleaves and resolves cruciform DNA. In Haemophilus influenzae (strain 86-028NP), this protein is Holliday junction branch migration complex subunit RuvB.